Here is a 338-residue protein sequence, read N- to C-terminus: MKVLGIESSCDDCCAAIVENGNTILSNIKLSQKEHKKYYGIVPEIASRLHTEFIMYVCQQAIISAKINISEIDLIAVTSQPGLIGSLIVGVNFAKGLSIALKKPLICIDHILGHLYAPLLNHTIEYPFLSLVLSGGHTILAKQNNFDDIEILGRTLDDACGEAFDKIAKHYKMGFPGGPNIEKLAIDGNQYAFNFPITIFDKKENRYDFSYSGLKTACIHQLEKFKNNNAQITNNNIAASFQRAAFENLIIPIKRAIKDTNIKKLIISGGVASNLYLREKIKNLEIETYYPPIDLCTDNAAMIAGIGYLMYLKYGASSIETNANSRIENYKYTKGVKL.

Fe cation-binding residues include histidine 110 and histidine 114. Substrate contacts are provided by residues valine 132–glycine 136, aspartate 165, glycine 178, and asparagine 274. Fe cation is bound at residue aspartate 298.

It belongs to the KAE1 / TsaD family. Requires Fe(2+) as cofactor.

Its subcellular location is the cytoplasm. It carries out the reaction L-threonylcarbamoyladenylate + adenosine(37) in tRNA = N(6)-L-threonylcarbamoyladenosine(37) in tRNA + AMP + H(+). Functionally, required for the formation of a threonylcarbamoyl group on adenosine at position 37 (t(6)A37) in tRNAs that read codons beginning with adenine. Is involved in the transfer of the threonylcarbamoyl moiety of threonylcarbamoyl-AMP (TC-AMP) to the N6 group of A37, together with TsaE and TsaB. TsaD likely plays a direct catalytic role in this reaction. In Borrelia recurrentis (strain A1), this protein is tRNA N6-adenosine threonylcarbamoyltransferase.